We begin with the raw amino-acid sequence, 298 residues long: Protoheme IX farnesyltransferase (298 aa).

9 helical membrane passes run 19–39 (VMSL…QPVN), 40–60 (PFVA…SGAL), 91–111 (LAVG…GGNW), 112–132 (FAAG…TIWL), 140–160 (IVIG…LPTG), 167–187 (LLMF…LALF), 213–233 (IFAY…TSVG), 236–256 (LYLA…WQIL), and 277–297 (LSLY…WVGG).

This sequence belongs to the UbiA prenyltransferase family. Protoheme IX farnesyltransferase subfamily. As to quaternary structure, interacts with CtaA.

It localises to the cell inner membrane. It catalyses the reaction heme b + (2E,6E)-farnesyl diphosphate + H2O = Fe(II)-heme o + diphosphate. It participates in porphyrin-containing compound metabolism; heme O biosynthesis; heme O from protoheme: step 1/1. Converts heme B (protoheme IX) to heme O by substitution of the vinyl group on carbon 2 of heme B porphyrin ring with a hydroxyethyl farnesyl side group. The protein is Protoheme IX farnesyltransferase of Paracoccus denitrificans.